A 350-amino-acid chain; its full sequence is Uroporphyrinogen decarboxylase (350 aa).

Substrate-binding positions include 23 to 27 (RQAGR), Asp73, Tyr150, Thr205, and His322.

This sequence belongs to the uroporphyrinogen decarboxylase family. As to quaternary structure, homodimer.

The protein resides in the cytoplasm. It carries out the reaction uroporphyrinogen III + 4 H(+) = coproporphyrinogen III + 4 CO2. Its pathway is porphyrin-containing compound metabolism; protoporphyrin-IX biosynthesis; coproporphyrinogen-III from 5-aminolevulinate: step 4/4. Catalyzes the decarboxylation of four acetate groups of uroporphyrinogen-III to yield coproporphyrinogen-III. The polypeptide is Uroporphyrinogen decarboxylase (Methylococcus capsulatus (strain ATCC 33009 / NCIMB 11132 / Bath)).